The chain runs to 320 residues: uncharacterized protein (320 aa).

A run of 7 helical transmembrane segments spans residues 107-127 (LSKENMLMLILSTIVAIAGIY), 131-151 (VALLIASMIIAPLLGPNIALS), 169-189 (LIAELIFVIILSMIAGHYLPI), 200-220 (ITLDFWSIIIALSAGIAGSLS), 228-248 (IAVGVMIAIALLPPLAVFGLL), 260-280 (ALILFLINMIAINLSAIVIFS), and 299-319 (TLYAILLWVTLFIAIFVLIIY).

Its subcellular location is the cell membrane. This is an uncharacterized protein from Methanocaldococcus jannaschii (strain ATCC 43067 / DSM 2661 / JAL-1 / JCM 10045 / NBRC 100440) (Methanococcus jannaschii).